The primary structure comprises 397 residues: MKILVVNCGSSSLKYQLIDMTSEEALAKGLVERIGIEGSILTQKVNGEKYIIEEPMKDHKKAIELVLQALVDKEHGVISDMSEIAAVGHRVVHGGEKYASSVLINDEVMKALEDCVKLAPLHNPPNIIGINACRELMPKTPMVAVFDTAFHQTLPDYAYMYPLPYELYEQNGIRKYGFHGTSHRYVSSVASEMMEKDLKDIKVITCHLGNGASLCAVKEGKSVETSMGFTPLAGLAMGTRCGDIDPAILLFMERELKMSPDEVDTVINKKSGVLGISGVSSDFRDIEGAAEEGNKRAKLALDVYHYTVRQTIGAYTAVLNGVDAIVFTAGLGENSAASREEILNGLEYLGIKIDAEKNKQRGKQIEISTEDSKVKVFVIPTDEELMIARDTKEITAK.

Asn7 contributes to the Mg(2+) binding site. Lys14 provides a ligand contact to ATP. Arg90 is a binding site for substrate. Catalysis depends on Asp147, which acts as the Proton donor/acceptor. ATP is bound by residues 207-211 (HLGNG), 282-284 (DFR), and 330-334 (GLGEN). Glu383 serves as a coordination point for Mg(2+).

The protein belongs to the acetokinase family. As to quaternary structure, homodimer. Mg(2+) serves as cofactor. The cofactor is Mn(2+).

Its subcellular location is the cytoplasm. It carries out the reaction acetate + ATP = acetyl phosphate + ADP. It functions in the pathway metabolic intermediate biosynthesis; acetyl-CoA biosynthesis; acetyl-CoA from acetate: step 1/2. Its function is as follows. Catalyzes the formation of acetyl phosphate from acetate and ATP. Can also catalyze the reverse reaction. This chain is Acetate kinase, found in Clostridium botulinum (strain Langeland / NCTC 10281 / Type F).